The primary structure comprises 547 residues: Pyochelin synthase PchD (547 aa).

The protein belongs to the ATP-dependent AMP-binding enzyme family.

It catalyses the reaction salicylate + holo-[ACP] + ATP = salicyl-[ACP] + AMP + diphosphate. It participates in siderophore biosynthesis. The protein operates within antifungal biosynthesis. Involved in the biosynthesis of the siderophore pyochelin. Specifically adenylates salicylate and loads it onto the holo form of PchE via a thioester linkage to the phosphopanthetheine moiety. Is also involved in the synthesis of the antifungal antibiotic dihydroaeruginoic acid (Dha or hydroxyphenyl-thiazolinyl-carboxylate), a precursor of pyochelin. The chain is Pyochelin synthase PchD from Pseudomonas aeruginosa (strain ATCC 15692 / DSM 22644 / CIP 104116 / JCM 14847 / LMG 12228 / 1C / PRS 101 / PAO1).